The chain runs to 410 residues: Elongation factor Tu, chloroplastic (410 aa).

Residues 10–213 (KPHLNIGTIG…TVDEYIPTPK (204 aa)) enclose the tr-type G domain. The G1 stretch occupies residues 19–26 (GHVDHGKT). 19–26 (GHVDHGKT) serves as a coordination point for GTP. Mg(2+) is bound at residue threonine 26. The segment at 60–64 (GITIN) is G2. Positions 81–84 (DCPG) are G3. Residues 81–85 (DCPGH) and 136–139 (NKAD) contribute to the GTP site. Positions 136–139 (NKAD) are G4. Positions 174–176 (SAI) are G5.

The protein belongs to the TRAFAC class translation factor GTPase superfamily. Classic translation factor GTPase family. EF-Tu/EF-1A subfamily.

The protein resides in the plastid. Its subcellular location is the chloroplast. The enzyme catalyses GTP + H2O = GDP + phosphate + H(+). In terms of biological role, GTP hydrolase that promotes the GTP-dependent binding of aminoacyl-tRNA to the A-site of ribosomes during protein biosynthesis. This Codium fragile (Dead man's fingers) protein is Elongation factor Tu, chloroplastic (tufA).